The sequence spans 141 residues: MAIEKTLSIVKPNAVKKNVIGDIYSRFEKAGLKIVAAKMTQLDDDRAGGFYEEHKARPFFGELVEFMTSGPVLIQVLEGENAVALNREIMGATNPENAAEGTIRKDFADSLSENAVHGSDSTESAAREIAYFFDAAEIFSR.

ATP contacts are provided by lysine 11, phenylalanine 59, arginine 87, threonine 93, arginine 104, and asparagine 114. The active-site Pros-phosphohistidine intermediate is the histidine 117.

This sequence belongs to the NDK family. Homotetramer. Requires Mg(2+) as cofactor.

It is found in the cytoplasm. The catalysed reaction is a 2'-deoxyribonucleoside 5'-diphosphate + ATP = a 2'-deoxyribonucleoside 5'-triphosphate + ADP. The enzyme catalyses a ribonucleoside 5'-diphosphate + ATP = a ribonucleoside 5'-triphosphate + ADP. Functionally, major role in the synthesis of nucleoside triphosphates other than ATP. The ATP gamma phosphate is transferred to the NDP beta phosphate via a ping-pong mechanism, using a phosphorylated active-site intermediate. In Teredinibacter turnerae (strain ATCC 39867 / T7901), this protein is Nucleoside diphosphate kinase.